Here is a 258-residue protein sequence, read N- to C-terminus: Synapse differentiation-inducing gene protein 1 (258 aa).

The Cytoplasmic portion of the chain corresponds to 1 to 181; that stretch reads MDGIVEQKSV…NFLMMPPRDH (181 aa). Phosphoserine is present on serine 137. A helical membrane pass occupies residues 182–202; it reads LGLSVFSMLCCFWPLGIAAFY. The Extracellular portion of the chain corresponds to 203-228; that stretch reads LSHETNKAVAKGDFHQASTSSRRALF. Positions 229–249 form an intramembrane region, helical; sequence LAVLSITIGTGIYVGVAVALI. Over 250-258 the chain is Extracellular; that stretch reads AYLSKNNHL.

This sequence belongs to the CD225/Dispanin family. As to quaternary structure, homodimer. Interacts with GRIA1 and GRIA2. Enriched in the cerebellum and also expressed in the neocortex and modestly in the hippocampus (at protein level). Expressed in hippocampal neurons, both in cell body and neurites, however its presence is enriched at excitatory synapses and also found in postsynaptic cells.

It localises to the cell membrane. It is found in the early endosome membrane. The protein resides in the postsynaptic density membrane. Its subcellular location is the synapse. The protein localises to the cell projection. It localises to the dendrite. It is found in the dendritic spine. In terms of biological role, may regulate AMPA receptor content at nascent synapses, and have a role in postsynaptic development and maturation. The protein is Synapse differentiation-inducing gene protein 1 (Syndig1) of Rattus norvegicus (Rat).